A 724-amino-acid chain; its full sequence is N-alpha-acetyltransferase 35, NatC auxiliary subunit (724 aa).

This sequence belongs to the MAK10 family. Component of the N-terminal acetyltransferase C (NatC) complex.

It is found in the cytoplasm. Its function is as follows. Auxillary component of the N-terminal acetyltransferase C (NatC) complex which catalyzes acetylation of N-terminal methionine residues. N-terminal acetylation protects proteins from ubiquitination and degradation by the N-end rule pathway. Regulates cell proliferation during embryonic development. The sequence is that of N-alpha-acetyltransferase 35, NatC auxiliary subunit (naa35) from Danio rerio (Zebrafish).